A 243-amino-acid polypeptide reads, in one-letter code: Pyridoxine 5'-phosphate synthase (243 aa).

N7 contributes to the 3-amino-2-oxopropyl phosphate binding site. 9-10 (DH) contributes to the 1-deoxy-D-xylulose 5-phosphate binding site. R18 provides a ligand contact to 3-amino-2-oxopropyl phosphate. H43 serves as the catalytic Proton acceptor. Residues R45 and H50 each coordinate 1-deoxy-D-xylulose 5-phosphate. Catalysis depends on E70, which acts as the Proton acceptor. Residue T100 coordinates 1-deoxy-D-xylulose 5-phosphate. Residue H190 is the Proton donor of the active site. 3-amino-2-oxopropyl phosphate contacts are provided by residues G191 and 212–213 (GH).

It belongs to the PNP synthase family. Homooctamer; tetramer of dimers.

It localises to the cytoplasm. It catalyses the reaction 3-amino-2-oxopropyl phosphate + 1-deoxy-D-xylulose 5-phosphate = pyridoxine 5'-phosphate + phosphate + 2 H2O + H(+). Its pathway is cofactor biosynthesis; pyridoxine 5'-phosphate biosynthesis; pyridoxine 5'-phosphate from D-erythrose 4-phosphate: step 5/5. Its function is as follows. Catalyzes the complicated ring closure reaction between the two acyclic compounds 1-deoxy-D-xylulose-5-phosphate (DXP) and 3-amino-2-oxopropyl phosphate (1-amino-acetone-3-phosphate or AAP) to form pyridoxine 5'-phosphate (PNP) and inorganic phosphate. This is Pyridoxine 5'-phosphate synthase from Prochlorococcus marinus (strain MIT 9211).